A 336-amino-acid chain; its full sequence is Quinolinate synthase (336 aa).

2 residues coordinate iminosuccinate: His-25 and Ser-42. Cys-86 provides a ligand contact to [4Fe-4S] cluster. Residues Tyr-117 to Asn-119 and Ser-138 contribute to the iminosuccinate site. Residue Cys-198 participates in [4Fe-4S] cluster binding. Residues His-224–Glu-226 and Thr-241 each bind iminosuccinate. Position 288 (Cys-288) interacts with [4Fe-4S] cluster.

The protein belongs to the quinolinate synthase family. Type 3 subfamily. Requires [4Fe-4S] cluster as cofactor.

The protein localises to the cytoplasm. The catalysed reaction is iminosuccinate + dihydroxyacetone phosphate = quinolinate + phosphate + 2 H2O + H(+). It participates in cofactor biosynthesis; NAD(+) biosynthesis; quinolinate from iminoaspartate: step 1/1. Catalyzes the condensation of iminoaspartate with dihydroxyacetone phosphate to form quinolinate. This Helicobacter pylori (strain ATCC 700392 / 26695) (Campylobacter pylori) protein is Quinolinate synthase.